The following is a 570-amino-acid chain: Guanine nucleotide-binding protein alpha-3 subunit (570 aa).

The PH domain occupies 10–113 (RETLRAYLSK…WIEAIKHAIE (104 aa)). One can recognise a G-alpha domain in the interval 144–570 (PVLKLLLLGT…IISKTLEFYC (427 aa)). Residues 147–160 (KLLLLGTGESGKST) are G1 motif. Position 152–159 (152–159 (GTGESGKS)) interacts with GTP. Ser-159 provides a ligand contact to Mg(2+). 2 stretches are compositionally biased toward low complexity: residues 254-272 (NNNSNSSSLKNNSGGSSSS) and 290-316 (NSNSASPNGPSSSTTTSTINTHNRSNS). The interval 254-321 (NNNSNSSSLK…NRSNSDGSSN (68 aa)) is disordered. The G2 motif stretch occupies residues 386–394 (DILKSRATT). GTP contacts are provided by residues 388–394 (LKSRATT), 414–418 (DVAGQ), 483–486 (NKID), and Ala-544. Residue Thr-394 coordinates Mg(2+). Residues 410–419 (FRIVDVAGQR) are G3 motif. Residues 479–486 (ILFLNKID) form a G4 motif region. The tract at residues 542–547 (TCATDT) is G5 motif.

The protein belongs to the G-alpha family. G proteins are composed of 3 units; alpha, beta and gamma. The alpha chain contains the guanine nucleotide binding site.

In terms of biological role, guanine nucleotide-binding proteins (G proteins) are involved as modulators or transducers in various transmembrane signaling systems. G alpha-3 plays a role in development. G alpha-3 mutants fail to aggregate. The polypeptide is Guanine nucleotide-binding protein alpha-3 subunit (gpaC) (Dictyostelium discoideum (Social amoeba)).